A 767-amino-acid chain; its full sequence is Photosystem I P700 chlorophyll a apoprotein A1 (767 aa).

The interval 1 to 22 (MTISPPESGEKNKKVLEDPVKA) is disordered. Residues 8–22 (SGEKNKKVLEDPVKA) show a composition bias toward basic and acidic residues. Helical transmembrane passes span 76–99 (IFSA…FHGA), 162–185 (LMAL…FHYH), 201–225 (LNHH…HIGA), 309–327 (VSHH…GHMY), 368–391 (RHAQ…HHMY), 407–433 (LGLF…IAMV), 455–477 (ALIS…LYIH), and 558–576 (LMIH…LILL). Positions 600 and 609 each coordinate [4Fe-4S] cluster. 2 helical membrane passes run 616-637 (HVFL…HFSW) and 681-703 (ISMY…MFLF). Residue histidine 692 participates in divinylchlorophyll a' binding. The divinyl chlorophyll a site is built by methionine 700 and tyrosine 708. A phylloquinone-binding site is contributed by tryptophan 709. The helical transmembrane segment at 741 to 761 (AVGVTHFLVGGIATTWAFFHA) threads the bilayer.

It belongs to the PsaA/PsaB family. As to quaternary structure, the PsaA/B heterodimer binds the P700 divinyl chlorophyll special pair and subsequent electron acceptors. PSI consists of a core antenna complex that captures photons, and an electron transfer chain that converts photonic excitation into a charge separation. The cyanobacterial PSI reaction center is composed of one copy each of PsaA,B,C,D,E,F,I,J,K,L,M and X, and forms trimeric complexes. PSI electron transfer chain: 5 divinyl chlorophyll a, 1 divinyl chlorophyll a', 2 phylloquinones and 3 4Fe-4S clusters. PSI core antenna: 90 divinyl chlorophyll a, 22 carotenoids, 3 phospholipids and 1 galactolipid. P700 is a divinyl chlorophyll a/divinyl chlorophyll a' dimer, A0 is one or more divinyl chlorophyll a, A1 is one or both phylloquinones and FX is a shared 4Fe-4S iron-sulfur center. is required as a cofactor.

The protein localises to the cellular thylakoid membrane. It catalyses the reaction reduced [plastocyanin] + hnu + oxidized [2Fe-2S]-[ferredoxin] = oxidized [plastocyanin] + reduced [2Fe-2S]-[ferredoxin]. In terms of biological role, psaA and PsaB bind P700, the primary electron donor of photosystem I (PSI), as well as the electron acceptors A0, A1 and FX. PSI is a plastocyanin/cytochrome c6-ferredoxin oxidoreductase, converting photonic excitation into a charge separation, which transfers an electron from the donor P700 chlorophyll pair to the spectroscopically characterized acceptors A0, A1, FX, FA and FB in turn. Oxidized P700 is reduced on the lumenal side of the thylakoid membrane by plastocyanin or cytochrome c6. This chain is Photosystem I P700 chlorophyll a apoprotein A1, found in Prochlorococcus marinus (strain MIT 9301).